The sequence spans 373 residues: MDGVRAVLLAGGEGRRMGPLGRGRLKPLVPFGGTSRLIDFSIANVHRSGLRDVLLLSQYEERRLMDDLHLVWNGRHRGFRIDFGPYDAVYRRSPGKLPEQLPERIWPLERGTADALLTKAEYVFRQGDAEASEILVLHADHVYRFDYGDMIREHRASKAALTVSYQRIERRYVHLFGMVEFDGDGLLTAFEEKPDDPTSDLVFAAFCLFDAATLRRYLEQLRGTDWQHDISRDVIPAMLAGGELIRGYEVKSYWEDIGTVDRYHRAHRGLLRADPTLALSDMPLTVAPEVPRHLVPGGPGRRASVVAADVANEGEIVSSVVYPGARIGVDAHVVDCVVLPGARVPDGTHLASAIVLEDGSVQQCEAEREEVAL.

Residues Gly177 and 192–193 (EK) each bind substrate.

Belongs to the bacterial/plant glucose-1-phosphate adenylyltransferase family. Mg(2+) is required as a cofactor.

The catalysed reaction is valienol 1-phosphate + GTP + H(+) = GDP-valienol + diphosphate. Functionally, involved in the biosynthesis of the antifungal agent validamycin A. Catalyzes the conversion of valienol 1-phosphate to GDP-valienol and less effectively to ADP-valienol or other NDP derivatives. This is Valienol-1-phosphate guanylyltransferase from Streptomyces hygroscopicus subsp. limoneus.